The chain runs to 438 residues: Probable chaperone protein ClpB 1 (438 aa).

A coiled-coil region spans residues 1–94; that stretch reads MNTADTRQRL…NNRKIEARQA (94 aa). The segment at 1 to 118 is linker; that stretch reads MNTADTRQRL…IADIVSRWTG (118 aa). Residues 128-345 form an NBD2 region; the sequence is ERQKLLGIES…RIDEVILFTP (218 aa). 178-185 is an ATP binding site; sequence GPTGVGKT. The segment at 346–438 is C-terminal; that stretch reads LTRENLREIV…ENDAIVMKKK (93 aa).

Belongs to the ClpA/ClpB family. Homohexamer. The oligomerization is ATP-dependent.

The protein localises to the cytoplasm. Part of a stress-induced multi-chaperone system, it is involved in the recovery of the cell from heat-induced damage, in cooperation with DnaK, DnaJ and GrpE. Acts before DnaK, in the processing of protein aggregates. Protein binding stimulates the ATPase activity; ATP hydrolysis unfolds the denatured protein aggregates, which probably helps expose new hydrophobic binding sites on the surface of ClpB-bound aggregates, contributing to the solubilization and refolding of denatured protein aggregates by DnaK. The sequence is that of Probable chaperone protein ClpB 1 (clpB1) from Chlorobaculum tepidum (strain ATCC 49652 / DSM 12025 / NBRC 103806 / TLS) (Chlorobium tepidum).